Consider the following 589-residue polypeptide: MDAQVGDNPVAQAIAHALVEGFNKHYRIFRGTSRRAKEYFEAGDWRAQLDAVRDRVQFYDDRVDETVRRLLEEFDADSLDDATWQQVKLHFIGALINHKQPELAETFFNSVGCKILHRTYFNNDYIFARPAISTEYIESYPPVYSSYYPQDGGLRATIRRIIEDFDWQRPFEDLDRDIDCIMRAALAHLGEWPAMEVNCQLQVLYSAFYRNKTAYIIGKVINGWQDYPFTLAVRHGASGRLVIDTILLDPWRISVLFSLSRAYFMVDMEVPSGYVQFLRSIMPNKPRSELYTMLGLGKQGKTMFFRDLVAHLRHSNDQFIIAPGIRGLVMLVFTLPSYPYVFKIIKDVFGSSKNMDRATVKRKYLMVKQVDRVGRMADTLEFSYAALPLSRFHPELLEELRTLAPSAFEIDGDALVLKHFYIERRMTPLNIHLEKASDGEVEAAVHEYGNAIRELAIANIFPGDMLWKNFGVTRYGRVVFYDYDEIEYMTSMNFRRIPPAPHEDMELSGEPWYSAGPMDVFPEEFATFLLGSPRVRKAFMKYHRDLLEPAFWQAAQQGVRDGHVEDFFPYPAELRFSVMFPATPVAAQD.

ATP is bound by residues 322–328 (APGIRGL) and lysine 343. The active site involves aspartate 378.

This sequence belongs to the AceK family.

It localises to the cytoplasm. It carries out the reaction L-seryl-[isocitrate dehydrogenase] + ATP = O-phospho-L-seryl-[isocitrate dehydrogenase] + ADP + H(+). Functionally, bifunctional enzyme which can phosphorylate or dephosphorylate isocitrate dehydrogenase (IDH) on a specific serine residue. This is a regulatory mechanism which enables bacteria to bypass the Krebs cycle via the glyoxylate shunt in response to the source of carbon. When bacteria are grown on glucose, IDH is fully active and unphosphorylated, but when grown on acetate or ethanol, the activity of IDH declines drastically concomitant with its phosphorylation. The chain is Isocitrate dehydrogenase kinase/phosphatase from Azoarcus sp. (strain BH72).